A 1711-amino-acid polypeptide reads, in one-letter code: Reverse gyrase (1711 aa).

The RG N-terminal-type zinc finger occupies 1-39; it reads MKAVYREMCPNCWGRISDERLVMRNPCEECLDEPVHADS. Zn(2+)-binding residues include C9, C12, C27, and C30. Residues Q89 and 106–113 contribute to the ATP site; that span reads APTGMGKS. Residues 93–256 enclose the Helicase ATP-binding domain; that stretch reads VKRLLKGRSF…RLKKQMSRYL (164 aa). The DEAD box motif lies at 213–216; the sequence is DDVD. Residues 638–1711 form a topoisomerase I region; sequence DLVRSALMIV…YSEIQRYVSG (1074 aa). The Toprim domain occupies 642-805; sequence SALMIVESPN…NIKRIEFHEV (164 aa). A Mg(2+)-binding site is contributed by E648. The RG C-terminal-type zinc finger occupies 722-751; the sequence is LKRCRDCGHQFVDWEKKGVCPRCGSTNVRD. 4 residues coordinate Zn(2+): C725, C728, C741, and C744. D774 provides a ligand contact to Mg(2+). The Topo IA-type catalytic domain occupies 821–1709; it reads NENRVNAQIV…ELYSEIQRYV (889 aa). A DOD-type homing endonuclease domain is found at 1160-1287; sequence VFGLVLGDGT…LSVYLYQIGI (128 aa). The active-site O-(5'-phospho-DNA)-tyrosine intermediate is Y1452.

This sequence in the N-terminal section; belongs to the DEAD box helicase family. DDVD subfamily. The protein in the C-terminal section; belongs to the type IA topoisomerase family. In terms of assembly, monomer. The cofactor is Zn(2+). Requires Mg(2+) as cofactor. This protein undergoes a protein self splicing that involves a post-translational excision of the intervening region (intein) followed by peptide ligation.

Its subcellular location is the cytoplasm. It catalyses the reaction ATP + H2O = ADP + phosphate + H(+). Modifies the topological state of DNA by introducing positive supercoils in an ATP-dependent process, increasing the linking number in steps of +1. Binds to single-stranded DNA, transiently cleaves and then rejoins the ends, introducing a positive supercoil in the process. The scissile phosphodiester is attacked by the catalytic tyrosine of the enzyme, resulting in the formation of a DNA-(5'-phosphotyrosyl)-enzyme intermediate. Probably involved in rewinding DNA strands in regions of the chromosome that have opened up to allow replication, transcription, DNA repair and/or for DNA protection. This Thermococcus kodakarensis (strain ATCC BAA-918 / JCM 12380 / KOD1) (Pyrococcus kodakaraensis (strain KOD1)) protein is Reverse gyrase.